The following is a 181-amino-acid chain: Adenylate kinase (181 aa).

10–15 (GAGKGT) is a binding site for ATP. The interval 30 to 59 (STGDLFRSNISEGTELGLQAKQYLDAGDLV) is NMP. AMP contacts are provided by residues Thr31, Arg36, 57–59 (DLV), 85–88 (GFPR), and Gln92. An LID region spans residues 126-132 (GRGRADD). ATP is bound at residue Arg127. AMP contacts are provided by Arg129 and Arg140. ATP is bound at residue Gly166.

The protein belongs to the adenylate kinase family. As to quaternary structure, monomer.

Its subcellular location is the cytoplasm. It catalyses the reaction AMP + ATP = 2 ADP. It functions in the pathway purine metabolism; AMP biosynthesis via salvage pathway; AMP from ADP: step 1/1. Its function is as follows. Catalyzes the reversible transfer of the terminal phosphate group between ATP and AMP. Plays an important role in cellular energy homeostasis and in adenine nucleotide metabolism. The polypeptide is Adenylate kinase (Mycobacteroides abscessus (strain ATCC 19977 / DSM 44196 / CCUG 20993 / CIP 104536 / JCM 13569 / NCTC 13031 / TMC 1543 / L948) (Mycobacterium abscessus)).